The chain runs to 528 residues: ATP synthase subunit alpha (528 aa).

Residue Gly169–Thr176 participates in ATP binding.

The protein belongs to the ATPase alpha/beta chains family. As to quaternary structure, F-type ATPases have 2 components, CF(1) - the catalytic core - and CF(0) - the membrane proton channel. CF(1) has five subunits: alpha(3), beta(3), gamma(1), delta(1), epsilon(1). CF(0) has three main subunits: a(1), b(2) and c(9-12). The alpha and beta chains form an alternating ring which encloses part of the gamma chain. CF(1) is attached to CF(0) by a central stalk formed by the gamma and epsilon chains, while a peripheral stalk is formed by the delta and b chains.

The protein localises to the cell membrane. It catalyses the reaction ATP + H2O + 4 H(+)(in) = ADP + phosphate + 5 H(+)(out). Produces ATP from ADP in the presence of a proton gradient across the membrane. The alpha chain is a regulatory subunit. This is ATP synthase subunit alpha from Mycoplasmopsis agalactiae (strain NCTC 10123 / CIP 59.7 / PG2) (Mycoplasma agalactiae).